A 260-amino-acid chain; its full sequence is Phytolongin Phyl2.1 (260 aa).

Residues 12–114 (CIAKGTVILA…LDNPTQHCLQ (103 aa)) enclose the Longin domain. A helical; Anchor for type IV membrane protein transmembrane segment spans residues 231–251 (WIVLMFDLCICLVLFGIWLWI).

This sequence belongs to the synaptobrevin family.

The protein localises to the membrane. Functionally, non-SNARE longin protein involved in membrane-trafficking machinery. The polypeptide is Phytolongin Phyl2.1 (Arabidopsis thaliana (Mouse-ear cress)).